The primary structure comprises 127 residues: Fluoride-specific ion channel FluC (127 aa).

Helical transmembrane passes span 4–24 (IIYI…TQIA), 34–54 (FPFP…IGFF), 65–85 (FELR…FSTL), and 97–117 (FYGI…LAVL). Gly-77 and Thr-80 together coordinate Na(+).

The protein belongs to the fluoride channel Fluc/FEX (TC 1.A.43) family.

Its subcellular location is the cell inner membrane. The catalysed reaction is fluoride(in) = fluoride(out). Its activity is regulated as follows. Na(+) is not transported, but it plays an essential structural role and its presence is essential for fluoride channel function. Its function is as follows. Fluoride-specific ion channel. Important for reducing fluoride concentration in the cell, thus reducing its toxicity. In Bacteroides fragilis (strain ATCC 25285 / DSM 2151 / CCUG 4856 / JCM 11019 / LMG 10263 / NCTC 9343 / Onslow / VPI 2553 / EN-2), this protein is Fluoride-specific ion channel FluC.